A 151-amino-acid polypeptide reads, in one-letter code: UPF0208 membrane protein YfbV (151 aa).

A run of 2 helical transmembrane segments spans residues 46–65 (YAIR…QIAL) and 69–91 (LGPA…WWLG).

Belongs to the UPF0208 family.

Its subcellular location is the cell inner membrane. This is UPF0208 membrane protein YfbV from Salmonella choleraesuis (strain SC-B67).